The following is an 869-amino-acid chain: Probable beta-glucosidase F (869 aa).

The first 19 residues, 1 to 19 (MRVLSAIALVASLVPSALS), serve as a signal peptide directing secretion. Asparagine 69, asparagine 77, and asparagine 261 each carry an N-linked (GlcNAc...) asparagine glycan. Aspartate 289 is an active-site residue. 5 N-linked (GlcNAc...) asparagine glycosylation sites follow: asparagine 332, asparagine 364, asparagine 399, asparagine 425, and asparagine 478. The segment at 678-698 (AYPPTRPPKGPTPTYPTTIPN) is disordered. Residues 681 to 691 (PTRPPKGPTPT) show a composition bias toward pro residues. N-linked (GlcNAc...) asparagine glycosylation is present at asparagine 728.

This sequence belongs to the glycosyl hydrolase 3 family.

Its subcellular location is the secreted. It carries out the reaction Hydrolysis of terminal, non-reducing beta-D-glucosyl residues with release of beta-D-glucose.. Its pathway is glycan metabolism; cellulose degradation. Beta-glucosidases are one of a number of cellulolytic enzymes involved in the degradation of cellulosic biomass. Catalyzes the last step releasing glucose from the inhibitory cellobiose. The sequence is that of Probable beta-glucosidase F (bglF) from Neosartorya fischeri (strain ATCC 1020 / DSM 3700 / CBS 544.65 / FGSC A1164 / JCM 1740 / NRRL 181 / WB 181) (Aspergillus fischerianus).